The following is a 283-amino-acid chain: CASP-like protein 4A3 (283 aa).

The segment at 1–86 is disordered; it reads MRSPAKTMPS…VEETPSPIVV (86 aa). Topologically, residues 1 to 135 are cytoplasmic; it reads MRSPAKTMPS…SRREEVVKFS (135 aa). Over residues 9 to 20 the composition is skewed to low complexity; that stretch reads PSMSPSSVSTEK. The span at 50–79 shows a compositional bias: basic and acidic residues; that stretch reads SLDHSSESEKEDAKSKPESRRNKNPGKVEE. A helical transmembrane segment spans residues 136–156; sequence ALGFRLSEVVLALISFSIMAA. At 157-174 the chain is on the extracellular side; it reads DKTKGWSGDSFDRYKEYR. A helical membrane pass occupies residues 175–195; it reads FCLSVNVVAFVYSSFQACDLA. The Cytoplasmic portion of the chain corresponds to 196 to 212; that stretch reads YHLVKEKHLISHHLRPL. The chain crosses the membrane as a helical span at residues 213–233; it reads FEFIIDQVLAYLLMSASTAAV. At 234–251 the chain is on the extracellular side; sequence TRVDDWVSNWGKDEFTEM. Residues 252–272 traverse the membrane as a helical segment; sequence ASASIAMSFLAFLAFAFSSLI. At 273-283 the chain is on the cytoplasmic side; the sequence is SGYNLFNQGSL.

It belongs to the Casparian strip membrane proteins (CASP) family. Homodimer and heterodimers.

Its subcellular location is the cell membrane. The chain is CASP-like protein 4A3 from Arabidopsis thaliana (Mouse-ear cress).